Reading from the N-terminus, the 995-residue chain is MDKHLLVKRTLGCVCAATLMGAALATHHDSLNTVKAEEKTVQVQKGLPSIDSLHYLSENSKKEFKEELSKAGQESQKVKEILAKAQQADKQAQELAKMKIPEKIPMKPLHGSLYGGYFRTWHDKTSDPTEKDKVNSMGELPKEVDLAFIFHDWTKDYSLFWKELATKHVPKLNKQGTRVIRTIPWRFLAGGDNSGIAEDTSKYPNTPEGNKALAKAIVDEYVYKYNLDGLDVDVEHDSIPKVDKKEDTAGVERSIQVFEEIGKLIGPKGVDKSRLFIMDSTYMADKNPLIERGAPYINLLLVQVYGSQGEKGGWEPVSNRPEKTMEERWQGYSKYIRPEQYMIGFSFYEENAQEGNLWYDINSRKDEDKANGINTDITGTRAERYARWQPKTGGVKGGIFSYAIDRDGVAHQPKKYAKQKEFKDATDNIFHSDYSVSKALKTVMLKDKSYDLIDEKDFPDKALREAVMAQVGTRKGDLERFNGTLRLDNPAIQSLEGLNKFKKLAQLDLIGLSRITKLDRSVLPANMKPGKDTLETVLETYKKDNKEEPATIPPVSLKVSGLTGLKELDLSGFDRETLAGLDAATLTSLEKVDISGNKLDLAPGTENRQIFDTMLSTISNHVGSNEQTVKFDKQKPTGHYPDTYGKTSLRLPVANEKVDLQSQLLFGTVTNQGTLINSEADYKAYQNHKIAGRSFVDSNYHYNNFKVSYENYTVKVTDSTLGTTTDKTLATDKEETYKVDFFSPADKTKAVHTAKVIVGDEKTMMVNLAEGATVIGGSADPVNARKVFDGQLGSETDNISLGWDSKQSIIFKLKEDGLIKHWRFFNDSARNPETTNKPIQEASLQIFNIKDYNLDNLLENPNKFDDEKYWITVDTYSAQGERATAFSNTLNNITSKYWRVVFDTKGDRYSSPVVPELQILGYPLPNADTIMKTVTTAKELSQQKDKFSQKMLDELKIKEMALETSLNSKIFDVTAINANAGVLKDCIEKRQLLKK.

The signal sequence occupies residues 1–36 (MDKHLLVKRTLGCVCAATLMGAALATHHDSLNTVKA). Residues 112 to 432 (SLYGGYFRTW…KDATDNIFHS (321 aa)) enclose the GH18 domain. His151, Trp153, and Arg186 together coordinate a glycoprotein. The Proton donor role is filled by Glu235. The a glycoprotein site is built by Asp237, Gln303, Tyr305, Glu349, Glu350, Asn356, and Tyr402. LRR repeat units follow at residues 437 to 460 (SKALKTVMLKDKSYDLIDEKDFPD), 478 to 503 (LERFNGTLRLDNPAIQSLEGLNKFKK), 562 to 585 (LTGLKELDLSGFDRETLAGLDAAT), and 586 to 609 (LTSLEKVDISGNKLDLAPGTENRQ). Positions 765-923 (MVNLAEGATV…VPELQILGYP (159 aa)) are carbohydrate-binding module (CBM). The Ca(2+) site is built by Lys786, Asp789, Gln791, Pro915, and Glu916. The three-helix bundle (3H) stretch occupies residues 924–995 (LPNADTIMKT…CIEKRQLLKK (72 aa)).

The protein belongs to the glycosyl hydrolase 18 family. Cleaved by SpeB protease; leading to loss of endoglucosidase activity. EndoS is produced and secreted prior to SpeB, suggesting that it is degraded after acting as a host immune evasion factor.

The protein localises to the secreted. It is found in the host extracellular space. It catalyses the reaction an N(4)-(oligosaccharide-(1-&gt;3)-[oligosaccharide-(1-&gt;6)]-beta-D-Man-(1-&gt;4)-beta-D-GlcNAc-(1-&gt;4)-alpha-D-GlcNAc)-L-asparaginyl-[protein] + H2O = an oligosaccharide-(1-&gt;3)-[oligosaccharide-(1-&gt;6)]-beta-D-Man-(1-&gt;4)-D-GlcNAc + N(4)-(N-acetyl-beta-D-glucosaminyl)-L-asparaginyl-[protein]. Its function is as follows. Endoglucosidase that acts as a host immune evasion factor by mediating hydrolysis of the N-linked glycan from the Fc region of host immunoglobulin-gamma (IgG) during infection. Specifically catalyzes the hydrolysis of the beta-1,4 linkage between the first two N-acetylglucosamine residues of the complex-type N-linked glycan located on 'Asn-297' of the Fc region of IgG antibodies (IGHG1, IGHG2, IGHG3 or IGHG4), thereby preventing interaction between IgGs and Fc receptors and ability to activate the complement pathway. Shows a specificity for biantennary complex type N-glycans; does neither cleave larger complex type glycans nor oligomannose and nor hybrid-type glycans. Specifically acts on IgGs; does not act on immunoglobulin alpha, beta, delta or mu. This Streptococcus pyogenes serotype M1 protein is Endo-beta-N-acetylglucosaminidase EndoS.